A 434-amino-acid chain; its full sequence is 26S proteasome regulatory subunit 6A (434 aa).

Ala2 carries the N-acetylalanine modification. At Tyr180 the chain carries Phosphotyrosine. Position 222–229 (222–229 (GPPGTGKT)) interacts with ATP.

Belongs to the AAA ATPase family. In terms of processing, N-acetylated by NAT1.

Its subcellular location is the cytoplasm. The protein localises to the nucleus. Its function is as follows. The 26S proteasome is involved in the ATP-dependent degradation of ubiquitinated proteins. The regulatory (or ATPase) complex confers ATP dependency and substrate specificity to the 26S complex. This is 26S proteasome regulatory subunit 6A (RPT5) from Saccharomyces cerevisiae (strain ATCC 204508 / S288c) (Baker's yeast).